The chain runs to 139 residues: Membrane protein YqfB (139 aa).

The chain crosses the membrane as a helical span at residues Asp-3–Gly-23. The disordered stretch occupies residues Lys-25 to Arg-87. A coiled-coil region spans residues Asn-62 to Val-97. Basic and acidic residues predominate over residues Glu-65–Arg-87.

The protein resides in the cell membrane. This is Membrane protein YqfB (yqfB) from Bacillus subtilis (strain 168).